The sequence spans 206 residues: Probable GTP-binding protein EngB (206 aa).

An EngB-type G domain is found at 23–202 (HTAEVAFVGR…WGALLDTFGK (180 aa)). GTP-binding positions include 31–38 (GRSNVGKS), 58–62 (GRTRT), 83–86 (DLPG), 150–153 (TKVD), and 181–183 (FSS). Mg(2+) contacts are provided by Ser-38 and Thr-60.

The protein belongs to the TRAFAC class TrmE-Era-EngA-EngB-Septin-like GTPase superfamily. EngB GTPase family. Mg(2+) is required as a cofactor.

Necessary for normal cell division and for the maintenance of normal septation. This chain is Probable GTP-binding protein EngB, found in Myxococcus xanthus (strain DK1622).